The chain runs to 433 residues: Mannan endo-1,4-beta-mannosidase 2 (433 aa).

The signal sequence occupies residues 1 to 28 (MAAPTGNGPVIPILGFLTCVAFIYLSFG). Residue asparagine 46 is glycosylated (N-linked (GlcNAc...) asparagine). Substrate is bound at residue tryptophan 98. Asparagine 169 carries N-linked (GlcNAc...) asparagine glycosylation. Asparagine 214 is a substrate binding site. Catalysis depends on glutamate 215, which acts as the Proton donor. Tyrosine 295 contributes to the substrate binding site. The Nucleophile role is filled by glutamate 335. Tryptophan 377 lines the substrate pocket.

This sequence belongs to the glycosyl hydrolase 5 (cellulase A) family. In terms of tissue distribution, expressed in roots, stems, leaves and seeds.

It localises to the secreted. The enzyme catalyses Random hydrolysis of (1-&gt;4)-beta-D-mannosidic linkages in mannans, galactomannans and glucomannans.. This is Mannan endo-1,4-beta-mannosidase 2 (MAN2) from Arabidopsis thaliana (Mouse-ear cress).